The chain runs to 460 residues: Mercuric reductase (460 aa).

The 65-residue stretch at 1–65 folds into the HMA domain; it reads MTHLKITGMT…AVAGLGYKAM (65 aa). A metal cation is bound by residues C11 and C14. FAD contacts are provided by A110, G130, and T135. Residues C136 and C141 are joined by a disulfide bond. Residues K145 and A211 each coordinate FAD. Residues C457 and C458 each contribute to the Hg(2+) site.

This sequence belongs to the class-I pyridine nucleotide-disulfide oxidoreductase family. Homodimer. The cofactor is FAD.

The enzyme catalyses Hg + NADP(+) + H(+) = Hg(2+) + NADPH. Its function is as follows. Resistance to Hg(2+) in bacteria appears to be governed by a specialized system which includes mercuric reductase. MerA protein is responsible for volatilizing mercury as Hg(0). The sequence is that of Mercuric reductase (merA) from Serratia marcescens.